Reading from the N-terminus, the 337-residue chain is Lipoyl synthase (337 aa).

Cysteine 81, cysteine 86, cysteine 92, cysteine 107, cysteine 111, cysteine 114, and serine 323 together coordinate [4Fe-4S] cluster. The 220-residue stretch at 93-312 (FSHGTATFMI…EDYGNALGFS (220 aa)) folds into the Radical SAM core domain.

It belongs to the radical SAM superfamily. Lipoyl synthase family. [4Fe-4S] cluster serves as cofactor.

It localises to the cytoplasm. It carries out the reaction [[Fe-S] cluster scaffold protein carrying a second [4Fe-4S](2+) cluster] + N(6)-octanoyl-L-lysyl-[protein] + 2 oxidized [2Fe-2S]-[ferredoxin] + 2 S-adenosyl-L-methionine + 4 H(+) = [[Fe-S] cluster scaffold protein] + N(6)-[(R)-dihydrolipoyl]-L-lysyl-[protein] + 4 Fe(3+) + 2 hydrogen sulfide + 2 5'-deoxyadenosine + 2 L-methionine + 2 reduced [2Fe-2S]-[ferredoxin]. Its pathway is protein modification; protein lipoylation via endogenous pathway; protein N(6)-(lipoyl)lysine from octanoyl-[acyl-carrier-protein]: step 2/2. Catalyzes the radical-mediated insertion of two sulfur atoms into the C-6 and C-8 positions of the octanoyl moiety bound to the lipoyl domains of lipoate-dependent enzymes, thereby converting the octanoylated domains into lipoylated derivatives. The polypeptide is Lipoyl synthase (Xanthomonas campestris pv. campestris (strain B100)).